Consider the following 343-residue polypeptide: Small ribosomal subunit biogenesis GTPase RsgA (343 aa).

The 160-residue stretch at 116 to 275 folds into the CP-type G domain; it reads RGQLKPVAAN…LIDSPGIREF (160 aa). GTP is bound by residues 163–166 and 217–225; these read NKAD and GQSGVGKSS. Residues Cys-299, Cys-304, His-306, and Cys-312 each coordinate Zn(2+).

The protein belongs to the TRAFAC class YlqF/YawG GTPase family. RsgA subfamily. Monomer. Associates with 30S ribosomal subunit, binds 16S rRNA. Zn(2+) serves as cofactor.

The protein resides in the cytoplasm. One of several proteins that assist in the late maturation steps of the functional core of the 30S ribosomal subunit. Helps release RbfA from mature subunits. May play a role in the assembly of ribosomal proteins into the subunit. Circularly permuted GTPase that catalyzes slow GTP hydrolysis, GTPase activity is stimulated by the 30S ribosomal subunit. In Azotobacter vinelandii (strain DJ / ATCC BAA-1303), this protein is Small ribosomal subunit biogenesis GTPase RsgA.